Reading from the N-terminus, the 467-residue chain is tRNA modification GTPase MnmE (467 aa).

Arg-25, Glu-87, and Lys-130 together coordinate (6S)-5-formyl-5,6,7,8-tetrahydrofolate. One can recognise a TrmE-type G domain in the interval 226–389; the sequence is GLSVVLAGQP…LRGELLRIAG (164 aa). K(+) is bound at residue Asn-236. Residues 236–241, 255–261, and 280–283 each bind GTP; these read NVGKSS, TPIAGTT, and DTAG. Ser-240 lines the Mg(2+) pocket. Residues Thr-255, Ile-257, and Thr-260 each coordinate K(+). Position 261 (Thr-261) interacts with Mg(2+). (6S)-5-formyl-5,6,7,8-tetrahydrofolate is bound at residue Lys-467.

It belongs to the TRAFAC class TrmE-Era-EngA-EngB-Septin-like GTPase superfamily. TrmE GTPase family. In terms of assembly, homodimer. Heterotetramer of two MnmE and two MnmG subunits. K(+) is required as a cofactor.

The protein localises to the cytoplasm. Functionally, exhibits a very high intrinsic GTPase hydrolysis rate. Involved in the addition of a carboxymethylaminomethyl (cmnm) group at the wobble position (U34) of certain tRNAs, forming tRNA-cmnm(5)s(2)U34. The protein is tRNA modification GTPase MnmE of Burkholderia mallei (strain NCTC 10247).